Reading from the N-terminus, the 468-residue chain is Putative magnesium transporter MRS2-G (468 aa).

Disordered regions lie at residues 1–76 (MGRR…AGKV) and 182–205 (NGQP…VPRL). 2 stretches are compositionally biased toward low complexity: residues 14–23 (ASNASTSSST) and 31–45 (RLPS…SSPS). A compositionally biased stretch (pro residues) spans 46 to 67 (PASPSPPPPSASHPAPPSPPLA). The segment covering 187–197 (GDDHGEKHDDS) has biased composition (basic and acidic residues). 2 helical membrane passes run 402-422 (LTLT…GAFA) and 437-457 (FFWP…IVLL).

Belongs to the CorA metal ion transporter (MIT) (TC 1.A.35.5) family.

It localises to the membrane. Its function is as follows. Putative magnesium transporter. The sequence is that of Putative magnesium transporter MRS2-G (MRS2-G) from Oryza sativa subsp. indica (Rice).